A 558-amino-acid chain; its full sequence is Factor VII-activating protease (558 aa).

The N-terminal stretch at 1–23 (MFARMSDLHVLLLMVLAGKTAFG) is a signal peptide. The N-linked (GlcNAc...) asparagine glycan is linked to Asn54. EGF-like domains are found at residues 71–107 (EDDPCLSNPCTHGGDCLVSGATFTCRCPDPFSGNRCQ), 109–146 (VQNKCKNNPCGRGDCLITQSPPYHRCACKHPYRGSDCS), and 148–186 (VVPVCRPNPCQNGGTCSRQRRRSKFTCACPDQFKGKLCE). Cystine bridges form between Cys75/Cys86, Cys80/Cys95, Cys97/Cys106, Cys113/Cys123, Cys118/Cys134, Cys136/Cys145, Cys152/Cys163, Cys157/Cys174, Cys176/Cys185, Cys192/Cys274, Cys213/Cys255, Cys244/Cys269, Cys299/Cys433, Cys345/Cys361, Cys353/Cys422, Cys445/Cys513, Cys475/Cys491, and Cys503/Cys531. The Kringle domain maps to 191 to 274 (DCYVDDGYSY…KWEYCDVPAC (84 aa)). A Peptidase S1 domain is found at 312–553 (IFGGFKSTAG…FLTWIKATME (242 aa)). Active-site charge relay system residues include His360 and Asp409. Ser507 functions as the Charge relay system in the catalytic mechanism.

Belongs to the peptidase S1 family. Heterodimer; disulfide-linked. Heterodimer of a 50 kDa heavy and a 27 kDa light chain linked by a disulfide bond. In terms of processing, proteolytic cleavage at Gly-23 or Leu-27 can give rise to the 50 kDa heavy chain (HC) and cleavage at Arg-311 or Lys-317 can give rise to the 27 kDa light chain (LC). The HC can undergo further proteolytic cleavage giving rise to a 26 kDa fragment. The LC can undergo further proteolytic cleavage at Arg-311 leading to a 17-kDa fragment and at Arg-478 leading to a 8-kDa fragment.

The protein resides in the secreted. In terms of biological role, cleaves the alpha-chain at multiple sites and the beta-chain between 'Lys-53' and 'Lys-54' but not the gamma-chain of fibrinogen and therefore does not initiate the formation of the fibrin clot and does not cause the fibrinolysis directly. It does not cleave (activate) prothrombin and plasminogen but converts the inactive single chain urinary plasminogen activator (pro-urokinase) to the active two chain form. Activates coagulation factor VII. May function as a tumor suppressor negatively regulating cell proliferation and cell migration. The polypeptide is Factor VII-activating protease (HABP2) (Bos taurus (Bovine)).